A 533-amino-acid chain; its full sequence is Cytochrome P450 monooxygenase ltmK (533 aa).

Residues 27–47 form a helical membrane-spanning segment; it reads VHWLQVIVALLVLIVCIFLYW. The N-linked (GlcNAc...) asparagine glycan is linked to asparagine 116. Heme is bound at residue cysteine 473. N-linked (GlcNAc...) asparagine glycosylation is present at asparagine 528.

Belongs to the cytochrome P450 family. Heme is required as a cofactor.

It is found in the membrane. Its pathway is secondary metabolite biosynthesis. Functionally, cytochrome P450 monooxygenase; part of the gene clusters that mediates the biosynthesis of lolitrems, indole-diterpene mycotoxins that are potent tremorgens in mammals, and are synthesized by clavicipitaceous fungal endophytes in association with their grass hosts. The geranylgeranyl diphosphate (GGPP) synthase ltmG is proposed to catalyze the first step in lolitrem biosynthesis. LtmG catalyzes a series of iterative condensations of isopentenyl diphosphate (IPP) with dimethylallyl diphosphate (DMAPP), geranyl diphosphate (GPP), and farnesyl diphosphate (FPP), to form GGPP. GGPP then condenses with indole-3-glycerol phosphate to form 3-geranylgeranylindole, an acyclic intermediate, to be incorporated into paxilline. Either ltmG or ltmC could be responsible for this step, as both are putative prenyl transferases. The FAD-dependent monooxygenase ltmM then catalyzes the epoxidation of the two terminal alkenes of the geranylgeranyl moiety, which is subsequently cyclized by ltmB, to paspaline. The cytochrome P450 monooxygenases ltmQ and ltmP can sequentially oxidize paspaline to terpendole E and terpendole F. Alternatively, ltmP converts paspaline to an intermediate which is oxidized by ltmQ to terpendole F. LtmF, ltmK, ltmE and ltmJ appear to be unique to the epichloe endophytes. The prenyltransferase ltmF is involved in the 27-hydroxyl-O-prenylation. The cytochrome P450 monooxygenase ltmK is required for the oxidative acetal ring formation. The multi-functional prenyltransferase ltmE is required for C20- and C21-prenylations of the indole ring of paspalanes and acts together with the cytochrome P450 monooxygenase ltmJ to yield lolitremanes by multiple oxidations and ring closures. The stereoisomer pairs of lolitriol and lolitrem N or lolitrem B and lolitrem F may be attributed to variations in the way in which ring closure can occur under the action of ltmJ. While the major product of this pathway is lolitrem B, the prenyl transferases and cytochrome P450 monooxygenases identified in this pathway have a remarkable versatility in their regio- and stereo-specificities to generate a diverse range of metabolites that are products of a metabolic grid rather than a linear pathway. The sequence is that of Cytochrome P450 monooxygenase ltmK from Epichloe festucae var. lolii (Neotyphodium lolii).